The sequence spans 313 residues: Porphobilinogen deaminase (313 aa).

Cys-242 is subject to S-(dipyrrolylmethanemethyl)cysteine.

Belongs to the HMBS family. As to quaternary structure, monomer. Requires dipyrromethane as cofactor.

It catalyses the reaction 4 porphobilinogen + H2O = hydroxymethylbilane + 4 NH4(+). The protein operates within porphyrin-containing compound metabolism; protoporphyrin-IX biosynthesis; coproporphyrinogen-III from 5-aminolevulinate: step 2/4. Functionally, tetrapolymerization of the monopyrrole PBG into the hydroxymethylbilane pre-uroporphyrinogen in several discrete steps. The polypeptide is Porphobilinogen deaminase (Shigella flexneri).